The primary structure comprises 388 residues: Ribosomal RNA large subunit methyltransferase F (388 aa).

Positions 1-22 (MKTNNHNAKQAQTKTAKSNPSK) are enriched in polar residues. The segment at 1 to 51 (MKTNNHNAKQAQTKTAKSNPSKEVTKIKPKRVKNKPTAKAAKSTGLKTNAA) is disordered. The segment covering 27–36 (IKPKRVKNKP) has biased composition (basic residues).

The protein belongs to the methyltransferase superfamily. METTL16/RlmF family.

It localises to the cytoplasm. The enzyme catalyses adenosine(1618) in 23S rRNA + S-adenosyl-L-methionine = N(6)-methyladenosine(1618) in 23S rRNA + S-adenosyl-L-homocysteine + H(+). Specifically methylates the adenine in position 1618 of 23S rRNA. This is Ribosomal RNA large subunit methyltransferase F from Vibrio campbellii (strain ATCC BAA-1116).